A 244-amino-acid chain; its full sequence is Lactate utilization protein A (244 aa).

Belongs to the LutA/YkgE family.

Functionally, is involved in L-lactate degradation and allows cells to grow with lactate as the sole carbon source. The protein is Lactate utilization protein A of Halalkalibacterium halodurans (strain ATCC BAA-125 / DSM 18197 / FERM 7344 / JCM 9153 / C-125) (Bacillus halodurans).